The primary structure comprises 175 residues: Large ribosomal subunit protein uL10 (175 aa).

It belongs to the universal ribosomal protein uL10 family. In terms of assembly, part of the ribosomal stalk of the 50S ribosomal subunit. The N-terminus interacts with L11 and the large rRNA to form the base of the stalk. The C-terminus forms an elongated spine to which L12 dimers bind in a sequential fashion forming a multimeric L10(L12)X complex.

Functionally, forms part of the ribosomal stalk, playing a central role in the interaction of the ribosome with GTP-bound translation factors. This is Large ribosomal subunit protein uL10 from Prochlorococcus marinus (strain AS9601).